The following is a 177-amino-acid chain: Adenine phosphoribosyltransferase (177 aa).

It belongs to the purine/pyrimidine phosphoribosyltransferase family. As to quaternary structure, homodimer.

It is found in the cytoplasm. The enzyme catalyses AMP + diphosphate = 5-phospho-alpha-D-ribose 1-diphosphate + adenine. The protein operates within purine metabolism; AMP biosynthesis via salvage pathway; AMP from adenine: step 1/1. Catalyzes a salvage reaction resulting in the formation of AMP, that is energically less costly than de novo synthesis. The polypeptide is Adenine phosphoribosyltransferase (Rhodococcus opacus (strain B4)).